A 198-amino-acid chain; its full sequence is NAD(P)H dehydrogenase (quinone) (198 aa).

Residues 4–189 enclose the Flavodoxin-like domain; sequence ILVLYYSMYG…SIARYQGEYV (186 aa). FMN contacts are provided by residues 10-15 and 78-80; these read SMYGHI and TRF. Tyr-12 contributes to the NAD(+) binding site. Trp-98 serves as a coordination point for substrate. FMN contacts are provided by residues 113-118 and His-133; that span reads STGTGG.

The protein belongs to the WrbA family. FMN is required as a cofactor.

The enzyme catalyses a quinone + NADH + H(+) = a quinol + NAD(+). It catalyses the reaction a quinone + NADPH + H(+) = a quinol + NADP(+). In Salmonella typhi, this protein is NAD(P)H dehydrogenase (quinone).